Here is an 811-residue protein sequence, read N- to C-terminus: Leucine--tRNA ligase (811 aa).

A 'HIGH' region motif is present at residues 38 to 49 (SYPSGSNLHAGH). A 'KMSKS' region motif is present at residues 570–574 (KMSKS). ATP is bound at residue Lys573.

This sequence belongs to the class-I aminoacyl-tRNA synthetase family.

It localises to the cytoplasm. The enzyme catalyses tRNA(Leu) + L-leucine + ATP = L-leucyl-tRNA(Leu) + AMP + diphosphate. In Clostridium kluyveri (strain ATCC 8527 / DSM 555 / NBRC 12016 / NCIMB 10680 / K1), this protein is Leucine--tRNA ligase.